Here is a 286-residue protein sequence, read N- to C-terminus: Putative 2-aminoethylphosphonate transport system permease protein PhnU (286 aa).

6 consecutive transmembrane segments (helical) span residues 19–39, 76–96, 111–131, 150–170, 202–222, and 254–274; these read WLLL…SLIV, FFAT…LVFI, FIAL…GSAG, FLYS…PLVM, VIFP…LLLT, and YTVA…LFSL. The ABC transmembrane type-1 domain maps to 68 to 275; that stretch reads LLNTLQIAFF…VLSLGLFSLY (208 aa).

The protein belongs to the binding-protein-dependent transport system permease family.

Its subcellular location is the cell inner membrane. Probably part of the PhnSTUV complex (TC 3.A.1.11.5) involved in 2-aminoethylphosphonate import. Probably responsible for the translocation of the substrate across the membrane. This is Putative 2-aminoethylphosphonate transport system permease protein PhnU (phnU) from Salmonella typhimurium (strain LT2 / SGSC1412 / ATCC 700720).